The sequence spans 439 residues: GlutamylGlutaminyl-tRNA synthetase (439 aa).

The 'HIGH' region signature appears at 6-16 (PSPTGDMHIGN). A 'KMSKS' region motif is present at residues 232 to 236 (KMSKR). Lys235 provides a ligand contact to ATP.

The protein belongs to the class-I aminoacyl-tRNA synthetase family. Glutamate--tRNA ligase type 1 subfamily. In terms of assembly, monomer.

Its subcellular location is the cytoplasm. It catalyses the reaction tRNA(Glu) + L-glutamate + ATP = L-glutamyl-tRNA(Gln) + AMP + diphosphate. In terms of biological role, aminoacylates tRNA(Gln) with glutamate. Does not aminoacylate tRNA(Glu). This chain is GlutamylGlutaminyl-tRNA synthetase (gltX2), found in Helicobacter pylori (strain ATCC 700392 / 26695) (Campylobacter pylori).